The primary structure comprises 417 residues: Serine hydroxymethyltransferase (417 aa).

(6S)-5,6,7,8-tetrahydrofolate-binding positions include L121 and 125-127 (GHL). K229 carries the N6-(pyridoxal phosphate)lysine modification. 355 to 357 (SPF) lines the (6S)-5,6,7,8-tetrahydrofolate pocket.

The protein belongs to the SHMT family. As to quaternary structure, homodimer. Pyridoxal 5'-phosphate serves as cofactor.

Its subcellular location is the cytoplasm. The enzyme catalyses (6R)-5,10-methylene-5,6,7,8-tetrahydrofolate + glycine + H2O = (6S)-5,6,7,8-tetrahydrofolate + L-serine. It functions in the pathway one-carbon metabolism; tetrahydrofolate interconversion. Its pathway is amino-acid biosynthesis; glycine biosynthesis; glycine from L-serine: step 1/1. Catalyzes the reversible interconversion of serine and glycine with tetrahydrofolate (THF) serving as the one-carbon carrier. This reaction serves as the major source of one-carbon groups required for the biosynthesis of purines, thymidylate, methionine, and other important biomolecules. Also exhibits THF-independent aldolase activity toward beta-hydroxyamino acids, producing glycine and aldehydes, via a retro-aldol mechanism. This is Serine hydroxymethyltransferase from Shewanella sp. (strain W3-18-1).